Reading from the N-terminus, the 386-residue chain is MATAQMHRNKVNSVALPSRVATETQSLILVKRLLAVSVSCITYLRGLFPEYAYGTRYLDDICVKILREDKSCPGSTQLVKWMLGCYDALQKKYLRMVMLAIYTDPEDPQTVTECYQFKFKYTASGPVMDFVSNNSNSVSTCSDAKKTSILLIRKLYILMQNLGPLPNDVCLTMKLFYYDEVTPADYQPPGFKEGTCEGLMFEGEPMYLNVGEVATPFHVLKVKVTTEKERMENIEKSIFKKQASKQPQTDEEKPDLSINDDLAQDNNGDRKRDDIETLKVEDLNLTCQEDGNLQSDDSQNSALADSQEKTSQAAPPAFGRKTRSGRIFQKPDLELKNQKESARASKGNQQARKPEKRSQSFEITGSQEDPAVAKRRKFSEPRTPLN.

An HORMA domain is found at 24–224; the sequence is TQSLILVKRL…TPFHVLKVKV (201 aa). 2 disordered regions span residues 237-274 and 289-386; these read SIFK…KRDD and EDGN…TPLN. Polar residues predominate over residues 289–313; the sequence is EDGNLQSDDSQNSALADSQEKTSQA. A compositionally biased stretch (basic and acidic residues) spans 329-343; the sequence is QKPDLELKNQKESAR.

The protein localises to the nucleus. Its subcellular location is the chromosome. Functionally, plays a key role in meiotic progression by ensuring that sufficient numbers of processed DNA double-strand breaks (DSBs) are available for successful homology search, promoting synaptonemal-complex formation independently and playing key role in the male mid-pachytene checkpoint and the female meiotic prophase checkpoint. The sequence is that of HORMA domain-containing protein 1 (hormad1) from Xenopus laevis (African clawed frog).